The following is a 798-amino-acid chain: Probable DEAD-box ATP-dependent RNA helicase 48 (798 aa).

Disordered stretches follow at residues 76–100 (KMWG…MSPK), 117–148 (DFWN…NSPI), and 236–257 (FRKN…GKMI). The segment covering 132–148 (GSRSGSDSIDSTSNSPI) has biased composition (low complexity). A compositionally biased stretch (acidic residues) spans 242-252 (STEEDSDEEGD). The short motif at 328 to 356 (KRFDESCISPLTLKALSASGILKMTRVQD) is the Q motif element. The Helicase ATP-binding domain occupies 359 to 543 (LSECLDGKDA…QLVLKRDHSY (185 aa)). 372–379 (AKTGTGKS) provides a ligand contact to ATP. The DEAD box motif lies at 491-494 (DEAD). In terms of domain architecture, Helicase C-terminal spans 577 to 726 (LLKEHINNTP…SIVKHQVDQS (150 aa)).

This sequence belongs to the DEAD box helicase family.

It carries out the reaction ATP + H2O = ADP + phosphate + H(+). The chain is Probable DEAD-box ATP-dependent RNA helicase 48 (RH48) from Arabidopsis thaliana (Mouse-ear cress).